Reading from the N-terminus, the 1481-residue chain is Cystic fibrosis transmembrane conductance regulator (1481 aa).

At 1 to 77 the chain is on the cytoplasmic side; sequence MQRSPLEKAS…KLINALRRCF (77 aa). The chain crosses the membrane as a helical span at residues 78–98; it reads FWRFMFYGIILYLGEVTKAVQ. The ABC transmembrane type-1 1 domain maps to 81–365; it reads FMFYGIILYL…WAVQTWYDSL (285 aa). Topologically, residues 99–122 are extracellular; sequence PLLLGRIIASYDPDNKAERSIAIY. Residues 123–146 form a helical membrane-spanning segment; sequence LGIGLCLLFIVRTLLLHPAIFGLH. Over 147–195 the chain is Cytoplasmic; that stretch reads HIGMQMRIAMFSLIYKKTLKLSSRVLDKISIGQLVSLLSNNLNKFDEGL. Residues 196 to 216 form a helical membrane-spanning segment; that stretch reads ALAHFVWIAPLQVTLLMGLLW. Residues 217–222 are Extracellular-facing; that stretch reads ELLQAF. Residues 223–243 traverse the membrane as a helical segment; that stretch reads TFCGLAFLVVLAFLQAGLGKM. Over 244 to 298 the chain is Cytoplasmic; it reads MMKYRDQRAGKINERLVITSEIIENIQSVKAYCWEEAMEKIIENLRQTELKLTRK. The chain crosses the membrane as a helical span at residues 299–319; the sequence is AAYVRYLNSSAFFFSGFFVVF. The Extracellular segment spans residues 320–339; it reads LSVLPYALLKGIILRKIFTT. Residues 340–358 traverse the membrane as a helical segment; that stretch reads ISFCIVLRMAVTRQFPWAV. Topologically, residues 359 to 858 are cytoplasmic; sequence QTWYDSLGAI…YLRYITVHKS (500 aa). Residues W401, 457–464, and Q492 contribute to the ATP site; that span reads GSTGAGKT. The region spanning 423–645 is the ABC transporter 1 domain; it reads NGDNNLFFSN…RPDFSSKLMG (223 aa). The S-palmitoyl cysteine moiety is linked to residue C523. Residues S548 and S659 each carry the phosphoserine modification. Positions 653–831 are disordered R region; that stretch reads TAERRNSIIT…EEINEEDLRD (179 aa). S669 is subject to Phosphoserine; by PKA. A Phosphoserine modification is found at S685. K687 is covalently cross-linked (Glycyl lysine isopeptide (Lys-Gly) (interchain with G-Cter in ubiquitin)). Phosphoserine is present on residues S699 and S711. Position 716 is a phosphothreonine (T716). Phosphoserine occurs at positions 736, 767, 790, 795, and 813. The helical transmembrane segment at 859–879 threads the bilayer; sequence LMFVLIWCLVVFLAEVAASLV. The ABC transmembrane type-1 2 domain maps to 859–1155; sequence LMFVLIWCLV…AVNSSIDVDS (297 aa). Topologically, residues 880 to 918 are extracellular; the sequence is VLCLFPKILFQDKGNSTKSANNSYAVIITSTSSYYIFYI. 2 N-linked (GlcNAc...) asparagine glycosylation sites follow: N894 and N900. The chain crosses the membrane as a discontinuously helical span at residues 919–939; the sequence is YVGVADTLLALGLFRGLPLVH. Over 940 to 990 the chain is Cytoplasmic; the sequence is TLITVSKTLHHKMLQSVLQAPMSTLNTLKTGGILNRFSKDIAVLDDLLPLT. Residues 991-1011 traverse the membrane as a helical segment; that stretch reads IFDFVQLLLIVIGAVVVVSVL. Residues 1012–1013 lie on the Extracellular side of the membrane; sequence QP. The chain crosses the membrane as a helical span at residues 1014–1034; it reads YIFLATVPVIAAFILLRAYFL. Over 1035-1095 the chain is Cytoplasmic; that stretch reads HTSQQLKQLE…TANWFLYLST (61 aa). Residues 1096 to 1116 form a helical membrane-spanning segment; the sequence is LRWFQMRIEMIFVIFFIAVTF. The Extracellular portion of the chain corresponds to 1117–1130; the sequence is ISILTTGEGEGRVG. The helical transmembrane segment at 1131–1151 threads the bilayer; it reads IILTLAMNIMGTLQWAVNSSI. The Cytoplasmic segment spans residues 1152-1481; the sequence is DVDSLMRSVS…TEEEVQETKI (330 aa). The ABC transporter 2 domain maps to 1211–1444; that stretch reads MTVKDLTAKY…KSLFRQAISP (234 aa). ATP is bound by residues Y1220 and 1245–1252; that span reads GRTGSGKS. An interaction with GORASP2 region spans residues 1387 to 1481; the sequence is RTLKQAFADC…TEEEVQETKI (95 aa). Residue C1396 is the site of S-palmitoyl cysteine attachment. Residues 1452 to 1481 form a disordered region; the sequence is PQRNSSRQKSRSNIAALKEETEEEVQETKI. Over residues 1453-1464 the composition is skewed to low complexity; that stretch reads QRNSSRQKSRSN. S1457 is modified (phosphoserine). Residues 1471 to 1481 are compositionally biased toward acidic residues; the sequence is ETEEEVQETKI. Residues 1479–1481 carry the PDZ-binding motif; that stretch reads TKI.

It belongs to the ABC transporter superfamily. ABCC family. CFTR transporter (TC 3.A.1.202) subfamily. In terms of assembly, monomer; does not require oligomerization for channel activity. May form oligomers in the membrane. Interacts with SLC26A3, SLC26A6 and NHERF1. Interacts with SHANK2. Interacts with MYO6. Interacts (via C-terminus) with GOPC (via PDZ domain); this promotes CFTR internalization and thereby decreases channel activity. Interacts with SLC4A7 through NHERF1. Found in a complex with MYO5B and RAB11A. Interacts with ANO1. Interacts with SLC26A8. Interacts with AHCYL1; the interaction increases CFTR activity. Interacts with CSE1L. The core-glycosylated form interacts with GORASP2 (via PDZ GRASP-type 1 domain) in respone to ER stress. Interacts with MARCHF2; the interaction leads to CFTR ubiqtuitination and degradation. Interacts with ADGRG2. In terms of processing, N-glycosylated. Post-translationally, phosphorylated; cAMP treatment promotes phosphorylation and activates the channel. Dephosphorylation decreases the ATPase activity (in vitro). Phosphorylation at PKA sites activates the channel. Phosphorylation at PKC sites enhances the response to phosphorylation by PKA. Phosphorylated by AMPK; this inhibits channel activity. Ubiquitinated, leading to its degradation in the lysosome. Deubiquitination by USP10 in early endosomes enhances its endocytic recycling to the cell membrane. Ubiquitinated by RNF185 during ER stress. Ubiquitinated by MARCHF2.

The protein localises to the apical cell membrane. The protein resides in the early endosome membrane. It is found in the cell membrane. It localises to the recycling endosome membrane. Its subcellular location is the endoplasmic reticulum membrane. The protein localises to the nucleus. It catalyses the reaction ATP + H2O + closed Cl(-) channel = ADP + phosphate + open Cl(-) channel.. It carries out the reaction chloride(in) = chloride(out). The enzyme catalyses hydrogencarbonate(in) = hydrogencarbonate(out). The catalysed reaction is ATP + H2O = ADP + phosphate + H(+). In terms of biological role, epithelial ion channel that plays an important role in the regulation of epithelial ion and water transport and fluid homeostasis. Mediates the transport of chloride ions across the cell membrane. Possesses an intrinsic ATPase activity and utilizes ATP to gate its channel; the passive flow of anions through the channel is gated by cycles of ATP binding and hydrolysis by the ATP-binding domains. The ion channel is also permeable to HCO(3)(-); selectivity depends on the extracellular chloride concentration. Exerts its function also by modulating the activity of other ion channels and transporters. Contributes to the regulation of the pH and the ion content of the epithelial fluid layer. Modulates the activity of the epithelial sodium channel (ENaC) complex, in part by regulating the cell surface expression of the ENaC complex. May regulate bicarbonate secretion and salvage in epithelial cells by regulating the transporter SLC4A7. Can inhibit the chloride channel activity of ANO1. Plays a role in the chloride and bicarbonate homeostasis during sperm epididymal maturation and capacitation. The sequence is that of Cystic fibrosis transmembrane conductance regulator from Muntiacus reevesi (Reeves' muntjac).